A 158-amino-acid chain; its full sequence is Ribosome maturation factor RimP (158 aa).

It belongs to the RimP family.

It localises to the cytoplasm. Functionally, required for maturation of 30S ribosomal subunits. This Pseudomonas fluorescens (strain Pf0-1) protein is Ribosome maturation factor RimP.